A 424-amino-acid chain; its full sequence is Serine--tRNA ligase (424 aa).

231 to 233 provides a ligand contact to L-serine; sequence TAE. 262–264 is an ATP binding site; sequence RSE. Position 285 (glutamate 285) interacts with L-serine. Residue 349 to 352 participates in ATP binding; sequence EISS. Serine 385 lines the L-serine pocket.

This sequence belongs to the class-II aminoacyl-tRNA synthetase family. Type-1 seryl-tRNA synthetase subfamily. Homodimer. The tRNA molecule binds across the dimer.

Its subcellular location is the cytoplasm. The catalysed reaction is tRNA(Ser) + L-serine + ATP = L-seryl-tRNA(Ser) + AMP + diphosphate + H(+). It catalyses the reaction tRNA(Sec) + L-serine + ATP = L-seryl-tRNA(Sec) + AMP + diphosphate + H(+). The protein operates within aminoacyl-tRNA biosynthesis; selenocysteinyl-tRNA(Sec) biosynthesis; L-seryl-tRNA(Sec) from L-serine and tRNA(Sec): step 1/1. Catalyzes the attachment of serine to tRNA(Ser). Is also able to aminoacylate tRNA(Sec) with serine, to form the misacylated tRNA L-seryl-tRNA(Sec), which will be further converted into selenocysteinyl-tRNA(Sec). The polypeptide is Serine--tRNA ligase (Marinobacter nauticus (strain ATCC 700491 / DSM 11845 / VT8) (Marinobacter aquaeolei)).